The primary structure comprises 486 residues: 23S rRNA (uracil(1939)-C(5))-methyltransferase RlmD (486 aa).

One can recognise a TRAM domain in the interval 10-71 (TVKAPEYLPD…SSFEKAVVMA (62 aa)). [4Fe-4S] cluster contacts are provided by Cys-84, Cys-94, Cys-97, and Cys-176. S-adenosyl-L-methionine contacts are provided by Gln-285, Phe-314, Asn-319, Glu-335, Asn-370, and Asp-391. Cys-442 functions as the Nucleophile in the catalytic mechanism.

It belongs to the class I-like SAM-binding methyltransferase superfamily. RNA M5U methyltransferase family. RlmD subfamily.

The enzyme catalyses uridine(1939) in 23S rRNA + S-adenosyl-L-methionine = 5-methyluridine(1939) in 23S rRNA + S-adenosyl-L-homocysteine + H(+). Functionally, catalyzes the formation of 5-methyl-uridine at position 1939 (m5U1939) in 23S rRNA. The protein is 23S rRNA (uracil(1939)-C(5))-methyltransferase RlmD of Polaromonas sp. (strain JS666 / ATCC BAA-500).